Consider the following 495-residue polypeptide: Neuronal acetylcholine receptor subunit beta-4 (495 aa).

The signal sequence occupies residues 1-20 (MRGTPLLLVSLFSLLQDGDC). At 21-235 (RLANAEEKLM…IIKRKPLFYT (215 aa)) the chain is on the extracellular side. N-linked (GlcNAc...) asparagine glycans are attached at residues N35, N92, N137, and N165. A disulfide bond links C152 and C166. The helical transmembrane segment at 236–256 (INLIIPCVLITSLAILVFYLP) threads the bilayer. The Cytoplasmic portion of the chain corresponds to 257–264 (SDCGEKMT). E261 is a Na(+) binding site. A helical membrane pass occupies residues 265–285 (LCISVLLALTFFLLLISKIVP). Over 286-297 (PTSLDIPLIGKY) the chain is Extracellular. A helical transmembrane segment spans residues 298 to 318 (LLFTMVLVTFSIVTTVCVLNV). At 319 to 463 (HHRSPSTHTM…WKFVAMVVDR (145 aa)) the chain is on the cytoplasmic side. Residues 464 to 484 (LFLWVFVFVCILGTMGLFLPP) traverse the membrane as a helical segment. Residues 485 to 495 (LFQIHAPSKDS) are Extracellular-facing.

It belongs to the ligand-gated ion channel (TC 1.A.9) family. Acetylcholine receptor (TC 1.A.9.1) subfamily. Beta-4/CHRNB4 sub-subfamily. As to quaternary structure, neuronal AChR is composed of two different types of subunits: alpha and beta. CHRNB4/Beta-4 subunit can be combined to CHRNA2/alpha-2, CHRNA3/alpha-3 or CHRNA4/alpha-4, CHRNA5/alpha-5 and CHRNB3/beta-3 to give rise to functional receptors. Forms stoichiometries such as (CHRNA3)2:(CHRNB4)3 or (CHRNA3:CHRNB4)2:CHRNB3. Interacts with RIC3; which is required for proper folding and assembly. Interacts with LYPD6. In the brain, it is detected in the medial habenula. In the peripheral nervous system, it is found at least in the adrenal gland.

It is found in the synaptic cell membrane. Its subcellular location is the cell membrane. It carries out the reaction Ca(2+)(in) = Ca(2+)(out). The enzyme catalyses K(+)(in) = K(+)(out). It catalyses the reaction Na(+)(in) = Na(+)(out). With respect to regulation, activated by a myriad of ligands such as acetylcholine, cytisine, nicotine, choline and epibatidine. nAChR activity is inhibited by the antagonist alpha-conotoxins BuIA and MII, small disulfide-constrained peptides from cone snails. The heteropentamer CHRNA3:CHRNB4 activity is blocked by the alpha-conotoxin ImI and AuIB. In terms of biological role, component of neuronal acetylcholine receptors (nAChRs) that function as pentameric, ligand-gated cation channels with high calcium permeability among other activities. nAChRs are excitatory neurotrasnmitter receptors formed by a collection of nAChR subunits known to mediate synaptic transmission in the nervous system and the neuromuscular junction. Each nAchR subunit confers differential attributes to channel properties, including activation, deactivation and desensitization kinetics, pH sensitivity, cation permeability, and binding to allosteric modulators. CHRNB4 forms heteropentameric neuronal acetylcholine receptors with CHRNA2, CHRNA3 and CHRNA4, as well as CHRNA5 and CHRNB3 as accesory subunits. CHRNA3:CHRNB4 being predominant in neurons of the autonomic ganglia, it is known as ganglionic nicotinic receptor. CHRNA3:CHRNB4 or CHRNA3:CHRNA5:CHRNB4 play also an important role in the habenulo-interpeduncular tract, modulating the mesolimbic dopamine system and affecting reward circuits and addiction. Hypothalamic CHRNA3:CHRNB4 nAChR activation by nicotine leads to activation of POMC neurons and a decrease in food intake. In Rattus norvegicus (Rat), this protein is Neuronal acetylcholine receptor subunit beta-4 (Chrnb4).